Reading from the N-terminus, the 174-residue chain is MSEVETTNDQTPAPKRKDKKPSRSQLRSASRRLALQAVYQWQMNKTAVSEIETQFVIDQDRDMDSCDKVYFRELLQGVTASAKKLDTLFEELLDRPLSELDPIELAVMRIGSYELSQRLDVPYRVAINESVELAKGFGATESHKYVNGILDKLAQRVRREEIAARREANKESNK.

Positions 1–11 (MSEVETTNDQT) are enriched in polar residues. The segment at 1 to 29 (MSEVETTNDQTPAPKRKDKKPSRSQLRSA) is disordered.

Belongs to the NusB family.

In terms of biological role, involved in transcription antitermination. Required for transcription of ribosomal RNA (rRNA) genes. Binds specifically to the boxA antiterminator sequence of the ribosomal RNA (rrn) operons. This is Transcription antitermination protein NusB from Marinomonas sp. (strain MWYL1).